We begin with the raw amino-acid sequence, 457 residues long: Dihydrolipoyl dehydrogenase (457 aa).

FAD is bound by residues 32–40, K49, and A113; that span reads EKEYFGGVC. C40 and C45 are joined by a disulfide. NAD(+) contacts are provided by residues 178–182, V235, and 262–265; these read GGGVI and SIGR. 2 residues coordinate FAD: D303 and A311. The active-site Proton acceptor is H437.

This sequence belongs to the class-I pyridine nucleotide-disulfide oxidoreductase family. Homodimer. FAD serves as cofactor.

The protein localises to the cytoplasm. It carries out the reaction N(6)-[(R)-dihydrolipoyl]-L-lysyl-[protein] + NAD(+) = N(6)-[(R)-lipoyl]-L-lysyl-[protein] + NADH + H(+). Lipoamide dehydrogenase is a component of the alpha-ketoacid dehydrogenase complexes. The chain is Dihydrolipoyl dehydrogenase (pdhD) from Mycoplasma pneumoniae (strain ATCC 29342 / M129 / Subtype 1) (Mycoplasmoides pneumoniae).